Here is a 374-residue protein sequence, read N- to C-terminus: Alpha-N-acetylgalactosaminide alpha-2,6-sialyltransferase 2 (374 aa).

Residues 1 to 7 (MGLPRGS) are Cytoplasmic-facing. Residues 8–28 (FFWLLLLLTAACSGLLFALYF) traverse the membrane as a helical; Signal-anchor for type II membrane protein segment. Residues 29 to 374 (SAVQRYPGPA…KAGILQLYQR (346 aa)) are Lumenal-facing. 2 disulfide bridges follow: C66–C148 and C151–C317. Residues N85 and N130 are each glycosylated (N-linked (GlcNAc...) asparagine). N156 serves as a coordination point for CMP-N-acetyl-beta-neuraminate. N161 carries N-linked (GlcNAc...) asparagine glycosylation. CMP-N-acetyl-beta-neuraminate-binding residues include N179, S304, and H336.

This sequence belongs to the glycosyltransferase 29 family. In terms of tissue distribution, expressed in skeletal muscle, heart, kidney, placenta, lung and leukocytes.

The protein localises to the golgi apparatus membrane. It catalyses the reaction a beta-D-galactosyl-(1-&gt;3)-N-acetyl-alpha-D-galactosaminyl derivative + CMP-N-acetyl-beta-neuraminate = a beta-D-galactosyl-(1-&gt;3)-[N-acetyl-alpha-neuraminyl-(2-&gt;6)]-N-acetyl-alpha-D-galactosaminyl derivative + CMP + H(+). It carries out the reaction a 3-O-[N-acetyl-alpha-D-galactosaminyl]-L-threonyl-[protein] + CMP-N-acetyl-beta-neuraminate = a 3-O-[N-acetyl-alpha-neuraminosyl-(2-&gt;6)-N-acetyl-alpha-D-galactosaminyl]-L-threonyl-[protein] + CMP + H(+). The catalysed reaction is a 3-O-[N-acetyl-alpha-neuraminyl-(2-&gt;3)-beta-D-galactosyl-(1-&gt;3)-N-acetyl-alpha-D-galactosaminyl]-L-threonyl-[protein] + CMP-N-acetyl-beta-neuraminate = a 3-O-{alpha-Neu5Ac-(2-&gt;3)-beta-D-Gal-(1-&gt;3)-[alpha-Neu5Ac-(2-&gt;6)]-alpha-D-GalNAc}-L-threonyl-[protein] + CMP + H(+). The protein operates within protein modification; protein glycosylation. Its function is as follows. Catalyzes the transfer of N-acetylneuraminyl groups onto glycan chains in glycoproteins. Conjugates sialic acid with an alpha-2-6 linkage to N-acetylgalactosamine (GalNAc) glycan chains linked to serine or threonine in glycoproteins. Sialylates alphaGalNAc- and Galbeta1-&gt;3GalNAc-O-Ser/Thr epitopes also known as Tn and T antigens. The polypeptide is Alpha-N-acetylgalactosaminide alpha-2,6-sialyltransferase 2 (ST6GALNAC2) (Homo sapiens (Human)).